The following is a 212-amino-acid chain: Large ribosomal subunit protein uL1 (212 aa).

This sequence belongs to the universal ribosomal protein uL1 family. In terms of assembly, part of the 50S ribosomal subunit.

Binds directly to 23S rRNA. Probably involved in E site tRNA release. In terms of biological role, protein L1 is also a translational repressor protein, it controls the translation of its operon by binding to its mRNA. The sequence is that of Large ribosomal subunit protein uL1 from Natronomonas pharaonis (strain ATCC 35678 / DSM 2160 / CIP 103997 / JCM 8858 / NBRC 14720 / NCIMB 2260 / Gabara) (Halobacterium pharaonis).